A 199-amino-acid chain; its full sequence is Pyridoxine/pyridoxamine 5'-phosphate oxidase (199 aa).

FMN contacts are provided by residues 44 to 49 (RTVLLK), 59 to 60 (YT), K66, and Q91. K49 provides a ligand contact to substrate. Substrate-binding residues include Y109, R113, and S117. FMN contacts are provided by residues 126-127 (QS) and W171. 177 to 179 (RLH) is a substrate binding site. R181 lines the FMN pocket.

It belongs to the pyridoxamine 5'-phosphate oxidase family. In terms of assembly, homodimer. FMN serves as cofactor.

It carries out the reaction pyridoxamine 5'-phosphate + O2 + H2O = pyridoxal 5'-phosphate + H2O2 + NH4(+). The enzyme catalyses pyridoxine 5'-phosphate + O2 = pyridoxal 5'-phosphate + H2O2. It functions in the pathway cofactor metabolism; pyridoxal 5'-phosphate salvage; pyridoxal 5'-phosphate from pyridoxamine 5'-phosphate: step 1/1. It participates in cofactor metabolism; pyridoxal 5'-phosphate salvage; pyridoxal 5'-phosphate from pyridoxine 5'-phosphate: step 1/1. In terms of biological role, catalyzes the oxidation of either pyridoxine 5'-phosphate (PNP) or pyridoxamine 5'-phosphate (PMP) into pyridoxal 5'-phosphate (PLP). This is Pyridoxine/pyridoxamine 5'-phosphate oxidase from Xanthomonas campestris pv. campestris (strain 8004).